Consider the following 329-residue polypeptide: Porphobilinogen deaminase (329 aa).

Cys-250 carries the S-(dipyrrolylmethanemethyl)cysteine modification.

Belongs to the HMBS family. In terms of assembly, monomer. Requires dipyrromethane as cofactor.

The catalysed reaction is 4 porphobilinogen + H2O = hydroxymethylbilane + 4 NH4(+). The protein operates within porphyrin-containing compound metabolism; protoporphyrin-IX biosynthesis; coproporphyrinogen-III from 5-aminolevulinate: step 2/4. Functionally, tetrapolymerization of the monopyrrole PBG into the hydroxymethylbilane pre-uroporphyrinogen in several discrete steps. This Burkholderia mallei (strain NCTC 10247) protein is Porphobilinogen deaminase.